The following is a 187-amino-acid chain: Elongation factor P (187 aa).

This sequence belongs to the elongation factor P family.

It is found in the cytoplasm. It functions in the pathway protein biosynthesis; polypeptide chain elongation. Functionally, involved in peptide bond synthesis. Stimulates efficient translation and peptide-bond synthesis on native or reconstituted 70S ribosomes in vitro. Probably functions indirectly by altering the affinity of the ribosome for aminoacyl-tRNA, thus increasing their reactivity as acceptors for peptidyl transferase. This is Elongation factor P from Sphingopyxis alaskensis (strain DSM 13593 / LMG 18877 / RB2256) (Sphingomonas alaskensis).